A 92-amino-acid chain; its full sequence is uncharacterized protein (92 aa).

The next 3 helical transmembrane spans lie at 1–21 (MEVL…GVIL), 29–49 (IIML…CYYL), and 51–71 (IAIV…LGYL).

It localises to the cell membrane. This is an uncharacterized protein from Methanocaldococcus jannaschii (strain ATCC 43067 / DSM 2661 / JAL-1 / JCM 10045 / NBRC 100440) (Methanococcus jannaschii).